A 196-amino-acid chain; its full sequence is dITP/XTP pyrophosphatase (196 aa).

A substrate-binding site is contributed by 8-13 (TKNEGK). Mg(2+) is bound by residues glutamate 41 and aspartate 70. Aspartate 70 acts as the Proton acceptor in catalysis. Substrate-binding positions include serine 71, 153–156 (FGYD), lysine 176, and 181–182 (HR).

The protein belongs to the HAM1 NTPase family. Homodimer. Mg(2+) is required as a cofactor.

It carries out the reaction XTP + H2O = XMP + diphosphate + H(+). It catalyses the reaction dITP + H2O = dIMP + diphosphate + H(+). The enzyme catalyses ITP + H2O = IMP + diphosphate + H(+). Its function is as follows. Pyrophosphatase that catalyzes the hydrolysis of nucleoside triphosphates to their monophosphate derivatives, with a high preference for the non-canonical purine nucleotides XTP (xanthosine triphosphate), dITP (deoxyinosine triphosphate) and ITP. Seems to function as a house-cleaning enzyme that removes non-canonical purine nucleotides from the nucleotide pool, thus preventing their incorporation into DNA/RNA and avoiding chromosomal lesions. This is dITP/XTP pyrophosphatase from Bacillus licheniformis (strain ATCC 14580 / DSM 13 / JCM 2505 / CCUG 7422 / NBRC 12200 / NCIMB 9375 / NCTC 10341 / NRRL NRS-1264 / Gibson 46).